A 66-amino-acid polypeptide reads, in one-letter code: Large ribosomal subunit protein bL33c (66 aa).

Belongs to the bacterial ribosomal protein bL33 family.

The protein resides in the plastid. The protein localises to the chloroplast. In Jasminum nudiflorum (Winter jasmine), this protein is Large ribosomal subunit protein bL33c.